The sequence spans 460 residues: UDP-N-acetylmuramoylalanine--D-glutamate ligase (460 aa).

120 to 126 (GSNGKTT) lines the ATP pocket.

This sequence belongs to the MurCDEF family.

Its subcellular location is the cytoplasm. It carries out the reaction UDP-N-acetyl-alpha-D-muramoyl-L-alanine + D-glutamate + ATP = UDP-N-acetyl-alpha-D-muramoyl-L-alanyl-D-glutamate + ADP + phosphate + H(+). It participates in cell wall biogenesis; peptidoglycan biosynthesis. Its function is as follows. Cell wall formation. Catalyzes the addition of glutamate to the nucleotide precursor UDP-N-acetylmuramoyl-L-alanine (UMA). This is UDP-N-acetylmuramoylalanine--D-glutamate ligase from Lactobacillus delbrueckii subsp. bulgaricus (strain ATCC BAA-365 / Lb-18).